Here is a 186-residue protein sequence, read N- to C-terminus: Acetyltransferase PA5475 (186 aa).

In terms of domain architecture, N-acetyltransferase spans 31–186 (VLIRPLREED…STQVIHRLAL (156 aa)). CoA contacts are provided by residues 117-119 (VTI), Gly-125, Asn-156, and 161-163 (DLC).

Its function is as follows. Catalyzes the transfer of an acetyl group from acetyl coenzyme A (AcCoA) to an acceptor substrate and releases both CoA and the acetylated product. It prefers the antibiotic chloramphenicol. This chain is Acetyltransferase PA5475, found in Pseudomonas aeruginosa (strain ATCC 15692 / DSM 22644 / CIP 104116 / JCM 14847 / LMG 12228 / 1C / PRS 101 / PAO1).